We begin with the raw amino-acid sequence, 510 residues long: Light-independent protochlorophyllide reductase subunit B (510 aa).

Aspartate 36 is a binding site for [4Fe-4S] cluster. The active-site Proton donor is aspartate 296. Substrate is bound at residue 431–432 (GM).

This sequence belongs to the ChlB/BchB/BchZ family. Protochlorophyllide reductase is composed of three subunits; ChlL, ChlN and ChlB. Forms a heterotetramer of two ChlB and two ChlN subunits. The cofactor is [4Fe-4S] cluster.

The protein localises to the plastid. It localises to the chloroplast. It catalyses the reaction chlorophyllide a + oxidized 2[4Fe-4S]-[ferredoxin] + 2 ADP + 2 phosphate = protochlorophyllide a + reduced 2[4Fe-4S]-[ferredoxin] + 2 ATP + 2 H2O. It functions in the pathway porphyrin-containing compound metabolism; chlorophyll biosynthesis (light-independent). Functionally, component of the dark-operative protochlorophyllide reductase (DPOR) that uses Mg-ATP and reduced ferredoxin to reduce ring D of protochlorophyllide (Pchlide) to form chlorophyllide a (Chlide). This reaction is light-independent. The NB-protein (ChlN-ChlB) is the catalytic component of the complex. The protein is Light-independent protochlorophyllide reductase subunit B of Auxenochlorella protothecoides (Green microalga).